Consider the following 187-residue polypeptide: UPF0301 protein Noc_0368 (187 aa).

Belongs to the UPF0301 (AlgH) family.

The polypeptide is UPF0301 protein Noc_0368 (Nitrosococcus oceani (strain ATCC 19707 / BCRC 17464 / JCM 30415 / NCIMB 11848 / C-107)).